Consider the following 1129-residue polypeptide: Ubiquitin carboxyl-terminal hydrolase 7 (1129 aa).

One can recognise an MATH domain in the interval 29–169 (EGHLALDIER…DDVIRLRCRF (141 aa)). Residues 190-500 (IGLRNQGATC…SAYMLVYVRD (311 aa)) enclose the USP domain. Catalysis depends on Cys199, which acts as the Nucleophile. His439 serves as the catalytic Proton acceptor.

This sequence belongs to the peptidase C19 family.

The protein resides in the nucleus. It carries out the reaction Thiol-dependent hydrolysis of ester, thioester, amide, peptide and isopeptide bonds formed by the C-terminal Gly of ubiquitin (a 76-residue protein attached to proteins as an intracellular targeting signal).. Hydrolase that deubiquitinates target proteins. The chain is Ubiquitin carboxyl-terminal hydrolase 7 from Caenorhabditis briggsae.